The following is a 192-amino-acid chain: Thymidine kinase (192 aa).

Residues G9–S16 and D85–Q88 contribute to the ATP site. E86 functions as the Proton acceptor in the catalytic mechanism. 4 residues coordinate Zn(2+): C143, C146, C181, and C184.

The protein belongs to the thymidine kinase family. As to quaternary structure, homotetramer.

Its subcellular location is the cytoplasm. The enzyme catalyses thymidine + ATP = dTMP + ADP + H(+). The sequence is that of Thymidine kinase from Shouchella clausii (strain KSM-K16) (Alkalihalobacillus clausii).